Consider the following 264-residue polypeptide: Phosphonates import ATP-binding protein PhnC (264 aa).

In terms of domain architecture, ABC transporter spans 8–255; that stretch reads LQAENLRMTF…KLIEIYGPEF (248 aa). 40-47 contributes to the ATP binding site; the sequence is GPSGSGKS.

This sequence belongs to the ABC transporter superfamily. Phosphonates importer (TC 3.A.1.9.1) family. The complex is composed of two ATP-binding proteins (PhnC), two transmembrane proteins (PhnE) and a solute-binding protein (PhnD).

Its subcellular location is the cell inner membrane. It carries out the reaction phosphonate(out) + ATP + H2O = phosphonate(in) + ADP + phosphate + H(+). Part of the ABC transporter complex PhnCDE involved in phosphonates import. Responsible for energy coupling to the transport system. This is Phosphonates import ATP-binding protein PhnC from Maricaulis maris (strain MCS10) (Caulobacter maris).